Consider the following 253-residue polypeptide: MARRKKIYEGKAKILYEGPEPGTIVQYFKDDATAFNAEKRATIDGKGVLNNRLSEFFMTGLNGIGVPTHFIKRLNMREQLVRAVEIIPIEIVVRNTAAGSISKRLGIPEGTALPRPIVEFYYKDDDLGDPIVSEEHIIAFQWASQQDLDDMVALALRVNDFMSGVMLSVGIKLVDFKIEVGRVFEGDYQRLIVADEISPDSCRLWDIKTGEKLDKDVFRRDLGNLADAYTEVAQRLGVLPKNATPMTKPTLIN.

The protein belongs to the SAICAR synthetase family.

It carries out the reaction 5-amino-1-(5-phospho-D-ribosyl)imidazole-4-carboxylate + L-aspartate + ATP = (2S)-2-[5-amino-1-(5-phospho-beta-D-ribosyl)imidazole-4-carboxamido]succinate + ADP + phosphate + 2 H(+). It functions in the pathway purine metabolism; IMP biosynthesis via de novo pathway; 5-amino-1-(5-phospho-D-ribosyl)imidazole-4-carboxamide from 5-amino-1-(5-phospho-D-ribosyl)imidazole-4-carboxylate: step 1/2. In Dinoroseobacter shibae (strain DSM 16493 / NCIMB 14021 / DFL 12), this protein is Phosphoribosylaminoimidazole-succinocarboxamide synthase.